A 1234-amino-acid polypeptide reads, in one-letter code: DNA-directed RNA polymerase subunit beta (1234 aa).

The interval 1169 to 1234 (ESVDEDADEL…LDLDDFGDEH (66 aa)) is disordered. Acidic residues-rich tracts occupy residues 1171 to 1180 (VDEDADELEV) and 1191 to 1234 (EKEE…GDEH).

Belongs to the RNA polymerase beta chain family. The RNAP catalytic core consists of 2 alpha, 1 beta, 1 beta' and 1 omega subunit. When a sigma factor is associated with the core the holoenzyme is formed, which can initiate transcription.

It carries out the reaction RNA(n) + a ribonucleoside 5'-triphosphate = RNA(n+1) + diphosphate. Its function is as follows. DNA-dependent RNA polymerase catalyzes the transcription of DNA into RNA using the four ribonucleoside triphosphates as substrates. The polypeptide is DNA-directed RNA polymerase subunit beta (Clostridium botulinum (strain Langeland / NCTC 10281 / Type F)).